The following is an 899-amino-acid chain: RNA-binding motif protein 25 (899 aa).

Residues 1–20 show a composition bias toward polar residues; sequence MADESSSPATGDPNSQKPES. The segment at 1–112 is disordered; that stretch reads MADESSSPAT…SMPQYQPQPG (112 aa). Residues 26 to 63 are compositionally biased toward pro residues; that stretch reads IPNPNPNPSLTPPPPQQHSQPPVAPLVPPGPPYAPPAQ. The 78-residue stretch at 204 to 281 folds into the RRM domain; sequence TTIYIGKIAT…QELLVNVNQA (78 aa). 2 disordered regions span residues 298-572 and 611-778; these read KKAK…EQNL and GESA…KESG. 2 stretches are compositionally biased toward basic and acidic residues: residues 317-340 and 354-372; these read EQDKLESADNETGKDGESKIKENI and EADREAMEKIETAIEERLK. A compositionally biased stretch (pro residues) spans 375-384; the sequence is PLPPPPPPPA. Over residues 430-505 the composition is skewed to basic and acidic residues; the sequence is WSKRNDRRSR…QYEKEKEKEK (76 aa). Residues 434-578 are a coiled coil; that stretch reads NDRRSRERGE…EQNLQQQQLD (145 aa). A compositionally biased stretch (acidic residues) spans 515 to 524; the sequence is YEEEEEEDDD. The short motif at 526-533 is the Nuclear localization signal 1 element; the sequence is SRRRWHRA. The segment covering 533 to 568 has biased composition (basic and acidic residues); the sequence is AALDERRRRQLREKEDDLADRLKEEEEVAEAKRSAE. The segment covering 626–640 has biased composition (polar residues); that stretch reads GSGNESMAIDNNSGS. Basic and acidic residues-rich tracts occupy residues 723–733 and 740–778; these read PKEETIETEKQ and DKASHRDRERERERDRDRDRVRDRGDGHSGPTKDAKESG. Positions 735–742 match the Nuclear localization signal 2 motif; sequence SRRSHDKA. Residues 802–899 enclose the PWI domain; it reads EDLFSYEINW…EAGVPVKSKA (98 aa).

Specifically associates with functional splicing complexes. Associates with exon junction complex (EJC) proteins. Phosphorylated; the phosphorylation level is repressed by abscisic acid (ABA).

The protein localises to the nucleus. In terms of biological role, RNA-binding protein that acts as a regulator of alternative pre-mRNA splicing. Negative regulator of responses to abscisic acid (ABA), including in early development. This is RNA-binding motif protein 25 from Arabidopsis thaliana (Mouse-ear cress).